Reading from the N-terminus, the 163-residue chain is Putative pre-16S rRNA nuclease (163 aa).

This sequence belongs to the YqgF nuclease family.

The protein localises to the cytoplasm. In terms of biological role, could be a nuclease involved in processing of the 5'-end of pre-16S rRNA. This chain is Putative pre-16S rRNA nuclease, found in Rhizobium leguminosarum bv. trifolii (strain WSM2304).